We begin with the raw amino-acid sequence, 550 residues long: Leiomodin-2 (550 aa).

The tract at residues 1-47 is interaction with tropomyosin alpha; it reads MSTFGYRRGLSKYESIDEDELLASLSPEELKELERELEDIEPDRNLP. Interaction with actin stretches follow at residues 1-165, 166-500, and 524-543; these read MSTF…TDNS, KPKT…KEIK, and VHEN…LRRV. 3 positions are modified to phosphoserine: serine 11, serine 15, and serine 24. Basic and acidic residues predominate over residues 84 to 94; it reads ERLGECGKVAE. Disordered stretches follow at residues 84–202 and 359–527; these read ERLG…PCGN and MDKQ…VHEN. A coiled-coil region spans residues 91 to 147; the sequence is KVAEEDKEESEEELIFTESNSEVSEEVCTEDEEESQEEEEDSEEEEDSEEEEETTEA. Composition is skewed to acidic residues over residues 95–105 and 113–145; these read EDKEESEEELI and VSEE…EETT. Composition is skewed to polar residues over residues 151-164 and 170-193; these read INGT…NTDN and FKSQ…NSES. A compositionally biased stretch (basic and acidic residues) spans 359-377; sequence MDKQRQKRMQEQKQQEGHD. Residues 391 to 402 show a composition bias toward polar residues; it reads TPGSSPYASPRQ. Position 407 is a phosphoserine (serine 407). Over residues 421–452 the composition is skewed to pro residues; that stretch reads PPSPVAPPPPPPPPPLPPHMLPPPPPPPAPPL. Residues 468–479 are compositionally biased toward polar residues; it reads QQESAQRALQNG. Residues 480-490 are compositionally biased toward basic residues; the sequence is QRKKKGKKVKK. The span at 497 to 515 shows a compositional bias: basic and acidic residues; it reads KEIKNSLRSVQEKKMEDSS. The WH2 domain occupies 524–543; it reads VHENLMEAIRGSSIRQLRRV.

It belongs to the tropomodulin family. Can bind at least three actin monomers and thereby provides a nucleus for actin filament formation. Interacts (via N-terminus) with tropomyosin alpha (TPM1) (via N-terminus). May also interact with TPM2 (via N-terminus). Interacts with FLII. Detected in neonate heart (at protein level). Detected in embryonic heart and in pharyngeal arches. Detected in adult heart.

Its subcellular location is the cytoplasm. It is found in the myofibril. It localises to the sarcomere. The protein localises to the m line. The protein resides in the cytoskeleton. Functionally, mediates nucleation of actin filaments and thereby promotes actin polymerization. Plays a role in the regulation of actin filament length. Required for normal sarcomere organization in the heart, and for normal heart function. The polypeptide is Leiomodin-2 (Lmod2) (Mus musculus (Mouse)).